The primary structure comprises 473 residues: Cucurbitadienol 11-hydroxylase (473 aa).

The helical transmembrane segment at 4-24 (VVLGLATLFVAYYIHWINKWR) threads the bilayer. A heme-binding site is contributed by Cys-422.

Belongs to the cytochrome P450 family. The cofactor is heme. In terms of tissue distribution, highly expressed in young fruits 15 days after anthesis (15-DAA). Also observed in roots.

The protein resides in the membrane. It catalyses the reaction cucurbitadienol + 2 reduced [NADPH--hemoprotein reductase] + 2 O2 = 11-oxocucurbitadienol + 2 oxidized [NADPH--hemoprotein reductase] + 3 H2O + 2 H(+). It carries out the reaction cucurbitadienol + reduced [NADPH--hemoprotein reductase] + O2 = 11-hydroxycucurbitadienol + oxidized [NADPH--hemoprotein reductase] + H2O + H(+). The enzyme catalyses 11-hydroxycucurbitadienol + reduced [NADPH--hemoprotein reductase] + O2 = 11-oxocucurbitadienol + oxidized [NADPH--hemoprotein reductase] + 2 H2O + H(+). The catalysed reaction is (24R)-24,25-dihydroxycucurbitadienol + reduced [NADPH--hemoprotein reductase] + O2 = mogrol + oxidized [NADPH--hemoprotein reductase] + H2O + H(+). It participates in secondary metabolite biosynthesis; terpenoid biosynthesis. Functionally, hydroxylase involved in the biosynthesis of cucurbitacin and mogroside tetracyclic triterpene natural products (e.g. siamenoside I and mogrosides IV, V and VI). Cucurbitacins have cytotoxic properties and exhibit deterrent taste as a defense barrier against herbivores. Mogrosides are nonsugar highly oxygenated compounds used as high-intensity zero-calorie sweeteners; they also possess pharmacological properties such as regulating immunity, lowering blood sugar and lipid levels, protecting the liver, and acting as antioxidants and antitumor agents. Catalyzes the oxidation of cucurbitadienol at the C-11 position to produce 11-oxocucurbitadienol, a possible biosynthetic intermediate from cucurbitadienol to mogrol. Also mediates the conversion of 24,25-dihydroxycucurbitadienol to mogrol. This Siraitia grosvenorii (Monk's fruit) protein is Cucurbitadienol 11-hydroxylase.